The chain runs to 954 residues: Translation initiation factor IF-2 (954 aa).

The segment covering 56–75 (KAAAPAAPKAPAPAAESRPA) has biased composition (low complexity). A disordered region spans residues 56–355 (KAAAPAAPKA…GVSVPRGDGN (300 aa)). Residues 76-87 (APAPGPAAPKAP) are compositionally biased toward pro residues. Composition is skewed to low complexity over residues 88–125 (APKV…KPGA) and 138–151 (PRQG…SAPR). Positions 241–254 (PGAPRPGGPRPTPG) are enriched in pro residues. Residues 269–322 (GRPGGGGRGPGRPGAPGTGGPGGGGGAPAGGGFGKGGRGRGGTQGAFGKGGAGR) show a composition bias toward gly residues. Basic residues predominate over residues 323–332 (GKQRKSKRAK). Positions 447 to 618 (PRAPVVTVMG…AVLLTADAAL (172 aa)) constitute a tr-type G domain. Residues 456–463 (GHVDHGKT) are G1. 456–463 (GHVDHGKT) serves as a coordination point for GTP. The G2 stretch occupies residues 481–485 (GITQH). Residues 506 to 509 (DTPG) form a G3 region. GTP-binding positions include 506–510 (DTPGH) and 560–563 (NKID). Residues 560-563 (NKID) form a G4 region. Residues 596–598 (SAR) are G5.

The protein belongs to the TRAFAC class translation factor GTPase superfamily. Classic translation factor GTPase family. IF-2 subfamily.

It localises to the cytoplasm. One of the essential components for the initiation of protein synthesis. Protects formylmethionyl-tRNA from spontaneous hydrolysis and promotes its binding to the 30S ribosomal subunits. Also involved in the hydrolysis of GTP during the formation of the 70S ribosomal complex. This Pseudarthrobacter chlorophenolicus (strain ATCC 700700 / DSM 12829 / CIP 107037 / JCM 12360 / KCTC 9906 / NCIMB 13794 / A6) (Arthrobacter chlorophenolicus) protein is Translation initiation factor IF-2.